Reading from the N-terminus, the 215-residue chain is MDFYYSPRSSGSRTIIMVAKALGLELNKKQLRITEGEHLKPEFLKLNPQHTIPTLVDNGFAIWESRAIAVYLVEKYGKDDSLFPNDPQKRALINQRLYFDMGTLHDSFMKYYYPFIRTGQLGNAENYKKVEAAFEFLDIFLEGQDYVAGSQLTVADIAILSSVSTFEVVEFDISKYPNVARWYANAKKITPGWDENWKGLLQMKTMYEAQKASLK.

In terms of domain architecture, GST N-terminal spans 1–80 (MDFYYSPRSS…YLVEKYGKDD (80 aa)). Residues Ser-9, 50 to 52 (HTI), and 64 to 66 (ESR) contribute to the glutathione site. The 122-residue stretch at 86-207 (DPQKRALINQ…KGLLQMKTMY (122 aa)) folds into the GST C-terminal domain.

This sequence belongs to the GST superfamily. Delta family. As to quaternary structure, homodimer.

It catalyses the reaction RX + glutathione = an S-substituted glutathione + a halide anion + H(+). Functionally, conjugation of reduced glutathione to a wide number of exogenous and endogenous hydrophobic electrophiles. May be involved in detoxification. The chain is Glutathione S-transferase D4 from Drosophila melanogaster (Fruit fly).